We begin with the raw amino-acid sequence, 98 residues long: NADH-ubiquinone oxidoreductase chain 4L (98 aa).

The next 3 helical transmembrane spans lie at 1–21 (MSLV…GLLM), 29–49 (SLLC…LTIL), and 61–81 (IILL…LVMV).

This sequence belongs to the complex I subunit 4L family. In terms of assembly, core subunit of respiratory chain NADH dehydrogenase (Complex I) which is composed of 45 different subunits.

It is found in the mitochondrion inner membrane. It catalyses the reaction a ubiquinone + NADH + 5 H(+)(in) = a ubiquinol + NAD(+) + 4 H(+)(out). Core subunit of the mitochondrial membrane respiratory chain NADH dehydrogenase (Complex I) which catalyzes electron transfer from NADH through the respiratory chain, using ubiquinone as an electron acceptor. Part of the enzyme membrane arm which is embedded in the lipid bilayer and involved in proton translocation. This is NADH-ubiquinone oxidoreductase chain 4L (MT-ND4L) from Muntiacus vuquangensis (Giant muntjac).